The primary structure comprises 353 residues: Phenol hydroxylase P5 protein (353 aa).

A 2Fe-2S ferredoxin-type domain is found at 3–93; it reads YQVTIEPIGT…DMVIEADVDE (91 aa). Cys37, Cys42, Cys45, and Cys77 together coordinate [2Fe-2S] cluster. The 100-residue stretch at 102–201 folds into the FAD-binding FR-type domain; sequence VQDYQATVIE…SGPYGQFFVR (100 aa).

As to quaternary structure, the multicomponent enzyme phenol hydroxylase is formed by P0, P1, P2, P3, P4 and P5 polypeptides. FAD serves as cofactor. [2Fe-2S] cluster is required as a cofactor.

It carries out the reaction phenol + NADPH + O2 + H(+) = catechol + NADP(+) + H2O. The protein operates within aromatic compound metabolism; phenol degradation. Functionally, catabolizes phenol, and some of its methylated derivatives. P5 is required for growth on phenol, and for in vitro phenol hydroxylase activity. Probable electron transfer from NADPH, via FAD and the 2Fe-2S center, to the oxygenase activity site of the enzyme. The chain is Phenol hydroxylase P5 protein (mphP) from Acinetobacter pittii (strain PHEA-2).